The chain runs to 473 residues: MTRPVVTRFAPSPTGFLHIGGGRTALFNWLYARKHGGTMLLRIEDTDRQRSTQEAIDAILDGLKWLGIDWDGATVYQFARAARHREVAEQLLAAGKAYRCYATAEELTAMRDKARAEGRAKLYDGSWRDRDPSEAPAGVKPTIRLKAPLTGETVIEDQVQGRVAWQNENLDDLVLLRGDGTPTYMLAVVVDDHDMGVTHVIRGDDHLINAARQKQIYDAMEWELPVMAHIPLIHGPDGSKLSKRHGALGVDAYRAMGYLPAALRNYLVRLGWSHGDQEIFTTQEMIDAFDLPAIGRSAARFDFAKLESLNGHYIRQSDDHSLVTLLEDLLKYIPQGPAIAAKFDDSIRAKLTQAMPGLKERAKTLIELLDNAGFIFADRPLALDPKAQAVLTPETRQLIGRLRAALEDVSPWTAATTEAAMRAFAEQAGLKLGAVAQPLRVALTGRTTSPGIFDVLAVLGRDECLSRLADQSA.

Residues 11 to 21 (PSPTGFLHIGG) carry the 'HIGH' region motif. The 'KMSKS' region signature appears at 240–244 (KLSKR). ATP is bound at residue Lys243.

It belongs to the class-I aminoacyl-tRNA synthetase family. Glutamate--tRNA ligase type 1 subfamily. In terms of assembly, monomer.

The protein localises to the cytoplasm. It catalyses the reaction tRNA(Glu) + L-glutamate + ATP = L-glutamyl-tRNA(Glu) + AMP + diphosphate. In terms of biological role, catalyzes the attachment of glutamate to tRNA(Glu) in a two-step reaction: glutamate is first activated by ATP to form Glu-AMP and then transferred to the acceptor end of tRNA(Glu). This Rhodopseudomonas palustris (strain TIE-1) protein is Glutamate--tRNA ligase.